The primary structure comprises 344 residues: N-acetyl-gamma-glutamyl-phosphate reductase (344 aa).

Cys-149 is a catalytic residue.

The protein belongs to the NAGSA dehydrogenase family. Type 1 subfamily.

Its subcellular location is the cytoplasm. The enzyme catalyses N-acetyl-L-glutamate 5-semialdehyde + phosphate + NADP(+) = N-acetyl-L-glutamyl 5-phosphate + NADPH + H(+). It participates in amino-acid biosynthesis; L-arginine biosynthesis; N(2)-acetyl-L-ornithine from L-glutamate: step 3/4. Catalyzes the NADPH-dependent reduction of N-acetyl-5-glutamyl phosphate to yield N-acetyl-L-glutamate 5-semialdehyde. The polypeptide is N-acetyl-gamma-glutamyl-phosphate reductase (Halorhodospira halophila (strain DSM 244 / SL1) (Ectothiorhodospira halophila (strain DSM 244 / SL1))).